Consider the following 303-residue polypeptide: ATP phosphoribosyltransferase (303 aa).

The protein belongs to the ATP phosphoribosyltransferase family. Long subfamily. Mg(2+) serves as cofactor.

It is found in the cytoplasm. The enzyme catalyses 1-(5-phospho-beta-D-ribosyl)-ATP + diphosphate = 5-phospho-alpha-D-ribose 1-diphosphate + ATP. It functions in the pathway amino-acid biosynthesis; L-histidine biosynthesis; L-histidine from 5-phospho-alpha-D-ribose 1-diphosphate: step 1/9. With respect to regulation, feedback inhibited by histidine. In terms of biological role, catalyzes the condensation of ATP and 5-phosphoribose 1-diphosphate to form N'-(5'-phosphoribosyl)-ATP (PR-ATP). Has a crucial role in the pathway because the rate of histidine biosynthesis seems to be controlled primarily by regulation of HisG enzymatic activity. The protein is ATP phosphoribosyltransferase of Haemophilus influenzae (strain PittEE).